Consider the following 443-residue polypeptide: Glutamyl-tRNA reductase (443 aa).

Residues 55-58, serine 113, 118-120, and glutamine 124 contribute to the substrate site; these read TCNR and EPQ. Catalysis depends on cysteine 56, which acts as the Nucleophile. 193–198 is a binding site for NADP(+); it reads GAGEMI.

Belongs to the glutamyl-tRNA reductase family. Homodimer.

The enzyme catalyses (S)-4-amino-5-oxopentanoate + tRNA(Glu) + NADP(+) = L-glutamyl-tRNA(Glu) + NADPH + H(+). The protein operates within porphyrin-containing compound metabolism; protoporphyrin-IX biosynthesis; 5-aminolevulinate from L-glutamyl-tRNA(Glu): step 1/2. It functions in the pathway porphyrin-containing compound metabolism; chlorophyll biosynthesis. Functionally, catalyzes the NADPH-dependent reduction of glutamyl-tRNA(Glu) to glutamate 1-semialdehyde (GSA). This is Glutamyl-tRNA reductase from Methylibium petroleiphilum (strain ATCC BAA-1232 / LMG 22953 / PM1).